The chain runs to 32 residues: ilv operon leader peptide (32 aa).

This is ilv operon leader peptide (ilvL) from Escherichia coli O157:H7.